The sequence spans 168 residues: Crossover junction endodeoxyribonuclease RuvC (168 aa).

Residues D10, E70, and D143 contribute to the active site. Positions 10, 70, and 143 each coordinate Mg(2+).

Belongs to the RuvC family. As to quaternary structure, homodimer which binds Holliday junction (HJ) DNA. The HJ becomes 2-fold symmetrical on binding to RuvC with unstacked arms; it has a different conformation from HJ DNA in complex with RuvA. In the full resolvosome a probable DNA-RuvA(4)-RuvB(12)-RuvC(2) complex forms which resolves the HJ. Requires Mg(2+) as cofactor.

Its subcellular location is the cytoplasm. The enzyme catalyses Endonucleolytic cleavage at a junction such as a reciprocal single-stranded crossover between two homologous DNA duplexes (Holliday junction).. Its function is as follows. The RuvA-RuvB-RuvC complex processes Holliday junction (HJ) DNA during genetic recombination and DNA repair. Endonuclease that resolves HJ intermediates. Cleaves cruciform DNA by making single-stranded nicks across the HJ at symmetrical positions within the homologous arms, yielding a 5'-phosphate and a 3'-hydroxyl group; requires a central core of homology in the junction. The consensus cleavage sequence is 5'-(A/T)TT(C/G)-3'. Cleavage occurs on the 3'-side of the TT dinucleotide at the point of strand exchange. HJ branch migration catalyzed by RuvA-RuvB allows RuvC to scan DNA until it finds its consensus sequence, where it cleaves and resolves the cruciform DNA. The chain is Crossover junction endodeoxyribonuclease RuvC from Roseiflexus sp. (strain RS-1).